The sequence spans 79 residues: Conotoxin Cl9.4 (79 aa).

An N-terminal signal peptide occupies residues 1–23 (MNCYLILTVALLLTSAMTGTTTA). The propeptide occupies 24 to 37 (GQLNKKGVTLREDD). 3 disulfides stabilise this stretch: cysteine 41/cysteine 58, cysteine 46/cysteine 68, and cysteine 48/cysteine 73.

Expressed by the venom duct.

It is found in the secreted. In Californiconus californicus (California cone), this protein is Conotoxin Cl9.4.